Reading from the N-terminus, the 91-residue chain is MELSRVLDNEVKLRNAIYLLMSIVNDTAVPRNIRRAATEALNYLRDERYTPGVRAANAVGVLDQVSQDPNMPLSARTKVWQVIAILETIHD.

Belongs to the UPF0147 family.

The protein is UPF0147 protein DKAM_0139 of Desulfurococcus amylolyticus (strain DSM 18924 / JCM 16383 / VKM B-2413 / 1221n) (Desulfurococcus kamchatkensis).